The primary structure comprises 56 residues: uncharacterized protein (56 aa).

Residues 30–52 form a helical membrane-spanning segment; sequence IKIGIICVIITWAIFSINHHHTI.

The protein resides in the membrane. This is an uncharacterized protein from Dictyostelium discoideum (Social amoeba).